A 373-amino-acid chain; its full sequence is Phosphoserine aminotransferase (373 aa).

R46 is an L-glutamate binding site. Residues F104, T150, D172, and Q195 each contribute to the pyridoxal 5'-phosphate site. At K196 the chain carries N6-(pyridoxal phosphate)lysine. 247 to 248 (NT) serves as a coordination point for pyridoxal 5'-phosphate.

Belongs to the class-V pyridoxal-phosphate-dependent aminotransferase family. SerC subfamily. Homodimer. The cofactor is pyridoxal 5'-phosphate.

Its subcellular location is the cytoplasm. It carries out the reaction O-phospho-L-serine + 2-oxoglutarate = 3-phosphooxypyruvate + L-glutamate. It catalyses the reaction 4-(phosphooxy)-L-threonine + 2-oxoglutarate = (R)-3-hydroxy-2-oxo-4-phosphooxybutanoate + L-glutamate. It participates in amino-acid biosynthesis; L-serine biosynthesis; L-serine from 3-phospho-D-glycerate: step 2/3. It functions in the pathway cofactor biosynthesis; pyridoxine 5'-phosphate biosynthesis; pyridoxine 5'-phosphate from D-erythrose 4-phosphate: step 3/5. Functionally, catalyzes the reversible conversion of 3-phosphohydroxypyruvate to phosphoserine and of 3-hydroxy-2-oxo-4-phosphonooxybutanoate to phosphohydroxythreonine. The sequence is that of Phosphoserine aminotransferase from Rhodococcus jostii (strain RHA1).